Reading from the N-terminus, the 115-residue chain is MDTWLVCWAIFSLLKAGLTEPEVTQTPSHQVTQMGQEVILRCVPISNHLYFYWYRQILGQKVEFLVSFYNNEISEKSEIFDDQFSVERPDGSNFTLKIRSTKLEDSAMYFCASSE.

Positions 1 to 19 (MDTWLVCWAIFSLLKAGLT) are cleaved as a signal peptide. The Ig-like domain occupies 21–115 (PEVTQTPSHQ…SAMYFCASSE (95 aa)). A disulfide bond links Cys42 and Cys111. Residue Asn93 is glycosylated (N-linked (GlcNAc...) asparagine).

Alpha-beta TR is a heterodimer composed of an alpha and beta chain; disulfide-linked. The alpha-beta TR is associated with the transmembrane signaling CD3 coreceptor proteins to form the TR-CD3 (TcR or TCR). The assembly of alpha-beta TR heterodimers with CD3 occurs in the endoplasmic reticulum where a single alpha-beta TR heterodimer associates with one CD3D-CD3E heterodimer, one CD3G-CD3E heterodimer and one CD247 homodimer forming a stable octameric structure. CD3D-CD3E and CD3G-CD3E heterodimers preferentially associate with TR alpha and TR beta chains, respectively. The association of the CD247 homodimer is the last step of TcR assembly in the endoplasmic reticulum and is required for transport to the cell surface.

It localises to the cell membrane. Its function is as follows. V region of the variable domain of T cell receptor (TR) beta chain that participates in the antigen recognition. Alpha-beta T cell receptors are antigen specific receptors which are essential to the immune response and are present on the cell surface of T lymphocytes. Recognize peptide-major histocompatibility (MH) (pMH) complexes that are displayed by antigen presenting cells (APC), a prerequisite for efficient T cell adaptive immunity against pathogens. Binding of alpha-beta TR to pMH complex initiates TR-CD3 clustering on the cell surface and intracellular activation of LCK that phosphorylates the ITAM motifs of CD3G, CD3D, CD3E and CD247 enabling the recruitment of ZAP70. In turn ZAP70 phosphorylates LAT, which recruits numerous signaling molecules to form the LAT signalosome. The LAT signalosome propagates signal branching to three major signaling pathways, the calcium, the mitogen-activated protein kinase (MAPK) kinase and the nuclear factor NF-kappa-B (NF-kB) pathways, leading to the mobilization of transcription factors that are critical for gene expression and essential for T cell growth and differentiation. The T cell repertoire is generated in the thymus, by V-(D)-J rearrangement. This repertoire is then shaped by intrathymic selection events to generate a peripheral T cell pool of self-MH restricted, non-autoaggressive T cells. Post-thymic interaction of alpha-beta TR with the pMH complexes shapes TR structural and functional avidity. This Homo sapiens (Human) protein is T cell receptor beta variable 2.